A 347-amino-acid chain; its full sequence is NADH-ubiquinone oxidoreductase chain 2 (347 aa).

A run of 10 helical transmembrane segments spans residues 1–21 (MNPLVFTVIMSTVMLGTAIVA), 25–45 (HWLMAWIGFEMNMLAVIPILM), 59–79 (YFLTQATASMLLMLAVTMNLV), 111–131 (FHFWVPEVAQGISLPSGLILL), 149–169 (INLDLLMTLSILSIGIGGWGG), 178–198 (IMAYSSIAHMGWMTTILAYNP), 201–221 (TLLNLAIYILLTTTTFMMFML), 237–257 (MPLLTTAILLTMLSLGGLPPL), 276–296 (VILPTMMAVMALLNLYFYMRL), and 326–346 (LSPLIILSTLILPLSPMLALL).

Belongs to the complex I subunit 2 family. As to quaternary structure, core subunit of respiratory chain NADH dehydrogenase (Complex I) which is composed of 45 different subunits. Interacts with TMEM242.

The protein localises to the mitochondrion inner membrane. The catalysed reaction is a ubiquinone + NADH + 5 H(+)(in) = a ubiquinol + NAD(+) + 4 H(+)(out). Core subunit of the mitochondrial membrane respiratory chain NADH dehydrogenase (Complex I) which catalyzes electron transfer from NADH through the respiratory chain, using ubiquinone as an electron acceptor. Essential for the catalytic activity and assembly of complex I. The protein is NADH-ubiquinone oxidoreductase chain 2 of Pteropus pumilus (Little golden-mantled flying fox).